The sequence spans 470 residues: 6-phospho-beta-galactosidase (470 aa).

5 residues coordinate D-galactose 6-phosphate: Q19, H116, N159, E160, and N297. E160 (proton donor) is an active-site residue. The Nucleophile role is filled by E375. D-galactose 6-phosphate-binding residues include S430, W431, K437, and Y439.

This sequence belongs to the glycosyl hydrolase 1 family.

The enzyme catalyses a 6-phospho-beta-D-galactoside + H2O = D-galactose 6-phosphate + an alcohol. It participates in carbohydrate metabolism; lactose degradation; D-galactose 6-phosphate and beta-D-glucose from lactose 6-phosphate: step 1/1. This is 6-phospho-beta-galactosidase from Staphylococcus epidermidis (strain ATCC 35984 / DSM 28319 / BCRC 17069 / CCUG 31568 / BM 3577 / RP62A).